The primary structure comprises 165 residues: UPF0303 protein Bcep1808_1522 (165 aa).

Belongs to the UPF0303 family.

This Burkholderia vietnamiensis (strain G4 / LMG 22486) (Burkholderia cepacia (strain R1808)) protein is UPF0303 protein Bcep1808_1522.